The following is a 678-amino-acid chain: Nucleolar protein 9 (678 aa).

Basic residues predominate over residues 1-15; that stretch reads MPRDKQKRGRRAEAK. The tract at residues 1 to 24 is disordered; the sequence is MPRDKQKRGRRAEAKRKRDDVITD. 3 Pumilio repeats span residues 108-143, 291-334, and 382-419; these read EANG…RLFS, GLDN…SLLR, and KILV…SAMD. Residues 477–496 form a disordered region; the sequence is QRSNQESDGTTSSSNTSSPE. Pumilio repeat units follow at residues 524–562 and 563–600; these read AVTT…QITS and RFSG…RFAE.

The protein resides in the nucleus. Its subcellular location is the nucleolus. Its function is as follows. RNA-binding nucleolar protein required for pre-rRNA processing. Involved in production of 18S rRNA and assembly of small ribosomal subunit. This is Nucleolar protein 9 (NOP9) from Paracoccidioides brasiliensis (strain Pb18).